A 78-amino-acid polypeptide reads, in one-letter code: Acyl carrier protein (78 aa).

Positions 1–76 (MSVAEKVKEI…DAISFIEKKK (76 aa)) constitute a Carrier domain. An O-(pantetheine 4'-phosphoryl)serine modification is found at serine 36.

Belongs to the acyl carrier protein (ACP) family. 4'-phosphopantetheine is transferred from CoA to a specific serine of apo-ACP by AcpS. This modification is essential for activity because fatty acids are bound in thioester linkage to the sulfhydryl of the prosthetic group.

It is found in the cytoplasm. Its pathway is lipid metabolism; fatty acid biosynthesis. Its function is as follows. Carrier of the growing fatty acid chain in fatty acid biosynthesis. The polypeptide is Acyl carrier protein (Solidesulfovibrio magneticus (strain ATCC 700980 / DSM 13731 / RS-1) (Desulfovibrio magneticus)).